Here is an 89-residue protein sequence, read N- to C-terminus: uncharacterized protein (89 aa).

This is an uncharacterized protein from Borreliella burgdorferi (strain ATCC 35210 / DSM 4680 / CIP 102532 / B31) (Borrelia burgdorferi).